A 692-amino-acid polypeptide reads, in one-letter code: Elongation factor G (692 aa).

The 276-residue stretch at 8-283 (NRIRNIGIAA…AVIDYLPAPT (276 aa)) folds into the tr-type G domain. GTP is bound by residues 17-24 (AHIDAGKT), 81-85 (DTPGH), and 135-138 (NKMD).

The protein belongs to the TRAFAC class translation factor GTPase superfamily. Classic translation factor GTPase family. EF-G/EF-2 subfamily.

The protein resides in the cytoplasm. Its function is as follows. Catalyzes the GTP-dependent ribosomal translocation step during translation elongation. During this step, the ribosome changes from the pre-translocational (PRE) to the post-translocational (POST) state as the newly formed A-site-bound peptidyl-tRNA and P-site-bound deacylated tRNA move to the P and E sites, respectively. Catalyzes the coordinated movement of the two tRNA molecules, the mRNA and conformational changes in the ribosome. In Helicobacter pylori (strain HPAG1), this protein is Elongation factor G.